Here is a 227-residue protein sequence, read N- to C-terminus: Extracellular small neutral protease (227 aa).

Positions 1-29 are cleaved as a signal peptide; the sequence is MRITLPLLSTAVGLGLTAAVLGTGPAATA. The propeptide occupies 30-42; that stretch reads AAPQEPVRAAQLG. Positions 156 and 158 each coordinate Ca(2+). H163 provides a ligand contact to Zn(2+). E164 is an active-site residue. Zn(2+)-binding residues include H167 and D173. A disulfide bond links C179 and C192.

It belongs to the peptidase M7 family. It depends on Ca(2+) as a cofactor. Requires Zn(2+) as cofactor. Post-translationally, the N-terminus is blocked.

Its subcellular location is the secreted. It carries out the reaction Hydrolyzes proteins with a preference for Tyr or Phe in the P1' position. Has no action on amino-acid p-nitroanilides.. The protein is Extracellular small neutral protease (snpA) of Streptomyces lividans.